The sequence spans 221 residues: Guanylate kinase (221 aa).

The Guanylate kinase-like domain occupies 20-198; sequence GSLFMVVAPS…ALAELRTVVQ (179 aa). An ATP-binding site is contributed by 27 to 34; it reads APSGAGKS.

This sequence belongs to the guanylate kinase family.

Its subcellular location is the cytoplasm. It carries out the reaction GMP + ATP = GDP + ADP. Essential for recycling GMP and indirectly, cGMP. This Ralstonia nicotianae (strain ATCC BAA-1114 / GMI1000) (Ralstonia solanacearum) protein is Guanylate kinase.